Here is a 62-residue protein sequence, read N- to C-terminus: Photosystem II reaction center protein Z (62 aa).

The next 2 membrane-spanning stretches (helical) occupy residues 8 to 28 (AVFA…AVFA) and 41 to 61 (FSGA…NSSV).

This sequence belongs to the PsbZ family. As to quaternary structure, PSII is composed of 1 copy each of membrane proteins PsbA, PsbB, PsbC, PsbD, PsbE, PsbF, PsbH, PsbI, PsbJ, PsbK, PsbL, PsbM, PsbT, PsbY, PsbZ, Psb30/Ycf12, at least 3 peripheral proteins of the oxygen-evolving complex and a large number of cofactors. It forms dimeric complexes.

It is found in the plastid. The protein resides in the chloroplast thylakoid membrane. Functionally, may control the interaction of photosystem II (PSII) cores with the light-harvesting antenna, regulates electron flow through the 2 photosystem reaction centers. PSII is a light-driven water plastoquinone oxidoreductase, using light energy to abstract electrons from H(2)O, generating a proton gradient subsequently used for ATP formation. The polypeptide is Photosystem II reaction center protein Z (Selaginella uncinata (Blue spike-moss)).